The chain runs to 157 residues: Protein Smg homolog (157 aa).

It belongs to the Smg family.

The protein is Protein Smg homolog of Aeromonas hydrophila subsp. hydrophila (strain ATCC 7966 / DSM 30187 / BCRC 13018 / CCUG 14551 / JCM 1027 / KCTC 2358 / NCIMB 9240 / NCTC 8049).